Here is an 816-residue protein sequence, read N- to C-terminus: S-layer protein (816 aa).

Residues 1-29 form the signal peptide; that stretch reads MAKTNSYKKVIAGTMTAAMVAGVVSPVAA. SLH domains are found at residues 30–93, 94–150, and 152–215; these read AGKS…DAKP, SFAD…KVNG, and PATK…VAKV. One can recognise a BIG2 domain in the interval 403–480; that stretch reads FTSKDFKQND…TVKDSKGKEL (78 aa).

It localises to the secreted. It is found in the cell wall. The protein localises to the S-layer. Its function is as follows. The S-layer is a paracrystalline mono-layered assembly of proteins which coat the surface of bacteria. The chain is S-layer protein from Bacillus thuringiensis subsp. finitimus.